A 114-amino-acid polypeptide reads, in one-letter code: uncharacterized protein (114 aa).

The next 2 helical transmembrane spans lie at 58–78 (CLLG…FFLL) and 94–114 (SISY…FCLA).

It localises to the membrane. This is an uncharacterized protein from Saccharomyces cerevisiae (strain ATCC 204508 / S288c) (Baker's yeast).